The primary structure comprises 377 residues: Pseudouridylate synthase RPUSD4, mitochondrial (377 aa).

Residues 1–15 (MAAPRWSASGPWIRG) constitute a mitochondrion transit peptide. Residues 36 to 62 (AASTAINAQRLAEKLRAQKREQDTKKE) adopt a coiled-coil conformation. The active site involves Asp-153.

This sequence belongs to the pseudouridine synthase RluA family. As to quaternary structure, interacts with 16S mt-rRNA, mt-tRNA(Phe) and mt-tRNA(Met). Forms a regulatory protein-RNA complex, consisting of RCC1L, NGRN, RPUSD3, RPUSD4, TRUB2, FASTKD2 and 16S mt-rRNA.

It localises to the mitochondrion matrix. The protein resides in the nucleus. The protein localises to the cytoplasm. The enzyme catalyses uridine in 5S rRNA = pseudouridine in 5S rRNA. It carries out the reaction a uridine in tRNA = a pseudouridine in tRNA. The catalysed reaction is a uridine in mRNA = a pseudouridine in mRNA. Catalyzes uridine to pseudouridine isomerization (pseudouridylation) of different mitochondrial RNA substrates. Acts on position 1397 in 16S mitochondrial ribosomal RNA (16S mt-rRNA). This modification is required for the assembly of 16S mt-rRNA into a functional mitochondrial ribosome. As a component of a functional protein-RNA module, consisting of RCC1L, NGRN, RPUSD3, RPUSD4, TRUB2, FASTKD2 and 16S mt-rRNA, controls 16S mt-rRNA abundance and is required for intra-mitochondrial translation. Acts on position 39 in mitochondrial tRNA(Phe). Also catalyzes pseudouridylation of mRNAs in nucleus: acts as a regulator of pre-mRNA splicing by mediating pseudouridylation of pre-mRNAs at locations associated with alternatively spliced regions. Pseudouridylation of pre-mRNAs near splice sites directly regulates mRNA splicing and mRNA 3'-end processing. In Homo sapiens (Human), this protein is Pseudouridylate synthase RPUSD4, mitochondrial.